The primary structure comprises 157 residues: Arginine repressor (157 aa).

It belongs to the ArgR family.

Its subcellular location is the cytoplasm. The protein operates within amino-acid biosynthesis; L-arginine biosynthesis [regulation]. Functionally, regulates arginine biosynthesis genes. This Bacteroides fragilis (strain YCH46) protein is Arginine repressor.